A 130-amino-acid chain; its full sequence is Protein ApaG (130 aa).

Residues 3-127 form the ApaG domain; it reads RAVTRQIEVT…FSLDSPDNKR (125 aa).

This chain is Protein ApaG, found in Bradyrhizobium diazoefficiens (strain JCM 10833 / BCRC 13528 / IAM 13628 / NBRC 14792 / USDA 110).